Consider the following 111-residue polypeptide: uncharacterized protein (111 aa).

Residues 60–80 traverse the membrane as a helical segment; it reads TFGRFLAHISCLICILSKRIF.

Its subcellular location is the mitochondrion membrane. This is an uncharacterized protein from Arabidopsis thaliana (Mouse-ear cress).